The chain runs to 298 residues: Nucleoid occlusion protein (298 aa).

A DNA-binding region (H-T-H motif) is located at residues 152-171; that stretch reads EALAQRLGKGQSTVANKLRL.

The protein belongs to the ParB family.

The protein localises to the cytoplasm. The protein resides in the nucleoid. Effects nucleoid occlusion by binding relatively nonspecifically to DNA and preventing the assembly of the division machinery in the vicinity of the nucleoid, especially under conditions that disturb the cell cycle. It helps to coordinate cell division and chromosome segregation by preventing the formation of the Z ring through the nucleoid, which would cause chromosome breakage. The chain is Nucleoid occlusion protein from Lysinibacillus sphaericus (strain C3-41).